The chain runs to 513 residues: ATP synthase subunit alpha 2 (513 aa).

Residue 169 to 176 (GDRQTGKT) participates in ATP binding.

Belongs to the ATPase alpha/beta chains family. F-type ATPases have 2 components, CF(1) - the catalytic core - and CF(0) - the membrane proton channel. CF(1) has five subunits: alpha(3), beta(3), gamma(1), delta(1), epsilon(1). CF(0) has three main subunits: a(1), b(2) and c(9-12). The alpha and beta chains form an alternating ring which encloses part of the gamma chain. CF(1) is attached to CF(0) by a central stalk formed by the gamma and epsilon chains, while a peripheral stalk is formed by the delta and b chains.

It localises to the cell inner membrane. It carries out the reaction ATP + H2O + 4 H(+)(in) = ADP + phosphate + 5 H(+)(out). Produces ATP from ADP in the presence of a proton gradient across the membrane. The alpha chain is a regulatory subunit. This chain is ATP synthase subunit alpha 2, found in Pseudoalteromonas atlantica (strain T6c / ATCC BAA-1087).